We begin with the raw amino-acid sequence, 170 residues long: Adenine phosphoribosyltransferase (170 aa).

The protein belongs to the purine/pyrimidine phosphoribosyltransferase family. Homodimer.

The protein resides in the cytoplasm. It carries out the reaction AMP + diphosphate = 5-phospho-alpha-D-ribose 1-diphosphate + adenine. It functions in the pathway purine metabolism; AMP biosynthesis via salvage pathway; AMP from adenine: step 1/1. Catalyzes a salvage reaction resulting in the formation of AMP, that is energically less costly than de novo synthesis. The protein is Adenine phosphoribosyltransferase of Streptococcus pneumoniae (strain Hungary19A-6).